The primary structure comprises 217 residues: 3,4-dihydroxy-2-butanone 4-phosphate synthase (217 aa).

D-ribulose 5-phosphate contacts are provided by residues 37–38 (RE), Asp42, 150–154 (RRGHT), and Glu174. Glu38 provides a ligand contact to Mg(2+). His153 contacts Mg(2+).

The protein belongs to the DHBP synthase family. In terms of assembly, homodimer. Mg(2+) serves as cofactor. Mn(2+) is required as a cofactor.

It carries out the reaction D-ribulose 5-phosphate = (2S)-2-hydroxy-3-oxobutyl phosphate + formate + H(+). It participates in cofactor biosynthesis; riboflavin biosynthesis; 2-hydroxy-3-oxobutyl phosphate from D-ribulose 5-phosphate: step 1/1. Functionally, catalyzes the conversion of D-ribulose 5-phosphate to formate and 3,4-dihydroxy-2-butanone 4-phosphate. The chain is 3,4-dihydroxy-2-butanone 4-phosphate synthase from Yersinia pseudotuberculosis serotype O:1b (strain IP 31758).